Here is a 331-residue protein sequence, read N- to C-terminus: Ketol-acid reductoisomerase (NADP(+)) (331 aa).

The KARI N-terminal Rossmann domain occupies Ala-2–Thr-182. NADP(+) is bound by residues Tyr-25 to Gln-28, Ser-51, Ser-53, and Asp-83 to Gln-86. Residue His-108 is part of the active site. Residue Gly-134 participates in NADP(+) binding. The KARI C-terminal knotted domain occupies Asn-183–Leu-328. 4 residues coordinate Mg(2+): Asp-191, Glu-195, Glu-227, and Glu-231. Ser-252 serves as a coordination point for substrate.

This sequence belongs to the ketol-acid reductoisomerase family. Mg(2+) is required as a cofactor.

The enzyme catalyses (2R)-2,3-dihydroxy-3-methylbutanoate + NADP(+) = (2S)-2-acetolactate + NADPH + H(+). It catalyses the reaction (2R,3R)-2,3-dihydroxy-3-methylpentanoate + NADP(+) = (S)-2-ethyl-2-hydroxy-3-oxobutanoate + NADPH + H(+). It participates in amino-acid biosynthesis; L-isoleucine biosynthesis; L-isoleucine from 2-oxobutanoate: step 2/4. The protein operates within amino-acid biosynthesis; L-valine biosynthesis; L-valine from pyruvate: step 2/4. Its function is as follows. Involved in the biosynthesis of branched-chain amino acids (BCAA). Catalyzes an alkyl-migration followed by a ketol-acid reduction of (S)-2-acetolactate (S2AL) to yield (R)-2,3-dihydroxy-isovalerate. In the isomerase reaction, S2AL is rearranged via a Mg-dependent methyl migration to produce 3-hydroxy-3-methyl-2-ketobutyrate (HMKB). In the reductase reaction, this 2-ketoacid undergoes a metal-dependent reduction by NADPH to yield (R)-2,3-dihydroxy-isovalerate. The polypeptide is Ketol-acid reductoisomerase (NADP(+)) (Synechococcus sp. (strain CC9902)).